Here is a 260-residue protein sequence, read N- to C-terminus: MRPYLDLLRDILDHGCPKGDRTGTGTLSVFGRMMRFDLSRGLPLVTTKKLHLPSIIHELLWFVSGSTNVRDLQRHGVTIWDEWADDNGELGPVYGRQWRNWNGAIDQLAGLVEQLRRNPGSRRLLVSAWNPSDLDAMALPPCHYAFQCHVADGRLSLMFQMRSADVFLGLPFNIAGYALLTHMLAQQTGYEPGELIWCGGDVHLYLNHLEQARLQLTREPYPPPTLKLARKPGSLFDYRYEDFVVEDYQAHPHIKAAVAV.

Position 21 (Arg21) interacts with dUMP. His51 lines the (6R)-5,10-methylene-5,6,7,8-tetrahydrofolate pocket. 122–123 lines the dUMP pocket; it reads RR. Cys142 functions as the Nucleophile in the catalytic mechanism. DUMP contacts are provided by residues 162 to 165, Asn173, and 203 to 205; these read RSAD and HLY. Position 165 (Asp165) interacts with (6R)-5,10-methylene-5,6,7,8-tetrahydrofolate. Residue Ala259 participates in (6R)-5,10-methylene-5,6,7,8-tetrahydrofolate binding.

The protein belongs to the thymidylate synthase family. Bacterial-type ThyA subfamily. As to quaternary structure, homodimer.

It localises to the cytoplasm. The catalysed reaction is dUMP + (6R)-5,10-methylene-5,6,7,8-tetrahydrofolate = 7,8-dihydrofolate + dTMP. It participates in pyrimidine metabolism; dTTP biosynthesis. Its function is as follows. Catalyzes the reductive methylation of 2'-deoxyuridine-5'-monophosphate (dUMP) to 2'-deoxythymidine-5'-monophosphate (dTMP) while utilizing 5,10-methylenetetrahydrofolate (mTHF) as the methyl donor and reductant in the reaction, yielding dihydrofolate (DHF) as a by-product. This enzymatic reaction provides an intracellular de novo source of dTMP, an essential precursor for DNA biosynthesis. This is Thymidylate synthase from Methylococcus capsulatus (strain ATCC 33009 / NCIMB 11132 / Bath).